The primary structure comprises 428 residues: Spliceosome RNA helicase DDX39B (428 aa).

A compositionally biased stretch (acidic residues) spans 1-19 (MAENDVDNELLDYEDDEVE). A disordered region spans residues 1–31 (MAENDVDNELLDYEDDEVETAAGGDGAEAPA). An N-acetylalanine modification is found at alanine 2. Lysine 36 is modified (N6-acetyllysine; alternate). A Glycyl lysine isopeptide (Lys-Gly) (interchain with G-Cter in SUMO2); alternate cross-link involves residue lysine 36. Phosphoserine occurs at positions 38 and 41. The short motif at 45-73 (SGFRDFLLKPELLRAIVDCGFEHPSEVQH) is the Q motif element. In terms of domain architecture, Helicase ATP-binding spans 76 to 249 (IPQAILGMDV…RKFMQDPMEI (174 aa)). 89 to 96 (AKSGMGKT) provides a ligand contact to ATP. Threonine 172 is subject to Phosphothreonine. The DECD box motif lies at 196–199 (DECD). The Helicase C-terminal domain occupies 261-422 (GLQQYYVKLK…ELPDEIDISS (162 aa)).

The protein belongs to the DEAD box helicase family. DECD subfamily. As to quaternary structure, homodimer, and heterodimer with DDX39A. DDX39B interacts with the THO subcomplex to form the THO-DDX39B complex which multimerizes into a 28-subunit tetrameric assembly. Component of the transcription/export (TREX) complex at least composed of ALYREF/THOC4, DDX39B, SARNP/CIP29, CHTOP and the THO subcomplex; in the complex interacts with THOC2. THOC1-THOC2-THOC3-DDX39B subcomplex is sufficient for the interaction with export factor NXF1-NXT1. TREX seems to have a dynamic structure involving ATP-dependent remodeling. Within the TREX complex bridges ALYREF/THOC4 and the THO subcomplex, and, in a ATP-dependent manner, ALYREF/THOC4 and SARNP/CIP29. Component of the spliceosome. Interacts directly with U2AF2. Interacts with RBM8A, RNPS1 and SRRM1, FYTTD1/UIF, THOC1, MX1 and POLDIP3. Interacts with LUZP4. Interacts with SARNP/CIP29 (via the C-terminal domain); the interaction is direct and facilitates RNA binding of DDX39B. (Microbial infection) Interacts with human cytomegalovirus/HHV-5 protein UL69.

The protein resides in the nucleus. The protein localises to the nucleus speckle. Its subcellular location is the cytoplasm. The enzyme catalyses ATP + H2O = ADP + phosphate + H(+). Its function is as follows. Involved in nuclear export of spliced and unspliced mRNA. Component of the TREX complex which is thought to couple mRNA transcription, processing and nuclear export, and specifically associates with spliced mRNA and not with unspliced pre-mRNA. The TREX complex is recruited to spliced mRNAs by a transcription-independent mechanism, binds to mRNA upstream of the exon-junction complex (EJC) and is recruited in a splicing- and cap-dependent manner to a region near the 5' end of the mRNA where it functions in mRNA export to the cytoplasm via the TAP/NXF1 pathway. The THOC1-THOC2-THOC3 core complex alone is sufficient to promote ATPase activity of DDX39B; in the complex THOC2 is the only component that directly interacts with DDX39B. Associates with SARNP/CIP29, which facilitates RNA binding of DDX39B and likely plays a role in mRNA export. May undergo several rounds of ATP hydrolysis during assembly of TREX to drive subsequent loading of components such as ALYREF/THOC4 and CHTOP onto mRNA. Also associates with pre-mRNA independent of ALYREF/THOC4. Involved in the nuclear export of intronless mRNA; the ATP-bound form is proposed to recruit export adapter ALYREF/THOC4 to intronless mRNA; its ATPase activity is cooperatively stimulated by RNA and ALYREF/THOC4 and ATP hydrolysis is thought to trigger the dissociation from RNA to allow the association of ALYREF/THOC4 and the NXF1-NXT1 heterodimer. Involved in transcription elongation and genome stability. In terms of biological role, splice factor that is required for the first ATP-dependent step in spliceosome assembly and for the interaction of U2 snRNP with the branchpoint. Has both RNA-stimulated ATP binding/hydrolysis activity and ATP-dependent RNA unwinding activity. Even with the stimulation of RNA, the ATPase activity is weak. Can only hydrolyze ATP but not other NTPs. The RNA stimulation of ATPase activity does not have a strong preference for the sequence and length of the RNA. However, ssRNA stimulates the ATPase activity much more strongly than dsRNA. Can unwind 5' or 3' overhangs or blunt end RNA duplexes in vitro. The ATPase and helicase activities are not influenced by U2AF2; the effect of ALYREF/THOC4 is reported conflictingly with [PubMed:23299939] reporting a stimulatory effect. Functionally, (Microbial infection) The TREX complex is essential for the export of Kaposi's sarcoma-associated herpesvirus (KSHV) intronless mRNAs and infectious virus production. This is Spliceosome RNA helicase DDX39B from Homo sapiens (Human).